A 1007-amino-acid polypeptide reads, in one-letter code: Mediator of RNA polymerase II transcription subunit 5 (1007 aa).

This sequence belongs to the Mediator complex subunit 5 family. In terms of assembly, component of the Mediator complex.

Its subcellular location is the nucleus. Component of the Mediator complex, a coactivator involved in the regulated transcription of nearly all RNA polymerase II-dependent genes. Mediator functions as a bridge to convey information from gene-specific regulatory proteins to the basal RNA polymerase II transcription machinery. Mediator is recruited to promoters by direct interactions with regulatory proteins and serves as a scaffold for the assembly of a functional preinitiation complex with RNA polymerase II and the general transcription factors. This is Mediator of RNA polymerase II transcription subunit 5 (nut1) from Aspergillus fumigatus (strain ATCC MYA-4609 / CBS 101355 / FGSC A1100 / Af293) (Neosartorya fumigata).